Here is a 686-residue protein sequence, read N- to C-terminus: Mitochondrial Rho GTPase 1 (686 aa).

The Cytoplasmic segment spans residues 1–648; the sequence is MPRRDLVRIV…PAQRIRVVAR (648 aa). Positions 4-172 constitute a Miro 1 domain; that stretch reads RDLVRIVLVG…FYFAQKAVLH (169 aa). GTP is bound by residues 13–20, 59–63, and 117–120; these read GDDGVGKS, DTSSN, and NKID. EF-hand domains follow at residues 188–223 and 341–376; these read KCLE…CFST and LGNQ…SPGN. Ca(2+) contacts are provided by Asp-201, Asp-203, Asp-205, Glu-212, Asp-354, Asp-356, Asp-358, and Glu-365. Residues 455-624 enclose the Miro 2 domain; it reads RNVFLCYVLG…WVAITRVALD (170 aa). GTP-binding positions include 464-471, 506-510, and 574-577; these read GATGSGKT, EMEGV, and TKSD. A helical; Anchor for type IV membrane protein transmembrane segment spans residues 649-665; it reads WGLAATTISAIVAVWMK. Over 666–686 the chain is Mitochondrial intermembrane; that stretch reads WQGYSFKGIWGWMAKFAGLRT.

The protein belongs to the mitochondrial Rho GTPase family.

It localises to the mitochondrion outer membrane. Mitochondrial GTPase involved in mitochondrial trafficking. Probably involved in control of anterograde transport of mitochondria and their subcellular distribution. This is Mitochondrial Rho GTPase 1 (GEM1) from Cryptococcus neoformans var. neoformans serotype D (strain B-3501A) (Filobasidiella neoformans).